The sequence spans 440 residues: GTPase Der (440 aa).

EngA-type G domains follow at residues 3–168 (PIIA…GKMD) and 177–353 (LKLA…EEYT). GTP is bound by residues 9-16 (GRPNVGKS), 56-60 (DTGGL), 119-122 (NKID), 183-190 (GKPNAGKS), 230-234 (DTAGI), and 295-298 (NKWD). Residues 354-438 (KRISTGLLNT…PIMISFENKS (85 aa)) form the KH-like domain.

It belongs to the TRAFAC class TrmE-Era-EngA-EngB-Septin-like GTPase superfamily. EngA (Der) GTPase family. Associates with the 50S ribosomal subunit.

In terms of biological role, GTPase that plays an essential role in the late steps of ribosome biogenesis. The chain is GTPase Der from Fusobacterium nucleatum subsp. nucleatum (strain ATCC 25586 / DSM 15643 / BCRC 10681 / CIP 101130 / JCM 8532 / KCTC 2640 / LMG 13131 / VPI 4355).